A 225-amino-acid chain; its full sequence is Histone H1.5 (225 aa).

The segment at 1–23 (MSDVAVAETPAVKTPTKASKATK) is disordered. S2 is subject to N-acetylserine. Over residues 9–19 (TPAVKTPTKAS) the composition is skewed to low complexity. Residues 37-113 (AHPPFINMIT…GANGRFRLAV (77 aa)) enclose the H15 domain. Over residues 145–156 (KKTVAKKTGDKV) the composition is skewed to basic and acidic residues. Residues 145–225 (KKTVAKKTGD…RKAVGTAPKA (81 aa)) form a disordered region. Residues 157-175 (KKVKSPKRIAKPAVKKVTK) show a composition bias toward basic residues. Low complexity predominate over residues 176–208 (KAAAPTKSAANETAPKKAAATEAAPKKAAVTKA).

It belongs to the histone H1/H5 family.

The protein localises to the nucleus. It is found in the chromosome. Histones H1 are necessary for the condensation of nucleosome chains into higher-order structures. This Caenorhabditis elegans protein is Histone H1.5 (hil-5).